Here is a 948-residue protein sequence, read N- to C-terminus: Non-lysosomal glucosylceramidase (948 aa).

At 1-736 (MAEPLAVETK…VMDGPSAYCS (736 aa)) the chain is on the extracellular side. Residues 177-195 (STRDKTSDPDGDPDGERTK) show a composition bias toward basic and acidic residues. The segment at 177-197 (STRDKTSDPDGDPDGERTKCQ) is disordered. A glycan (N-linked (GlcNAc...) asparagine) is linked at Asn200. Ser214 bears the Phosphoserine mark. Residues Asn288, Asn555, and Asn629 are each glycosylated (N-linked (GlcNAc...) asparagine). Residues Ser667 and Ser669 each carry the phosphoserine modification. Asn673 is a glycosylation site (N-linked (GlcNAc...) asparagine). Residues 737 to 753 (GLWLAALQAMSAMATIL) form a helical membrane-spanning segment. Residues 754 to 948 (DQPNDCLRYQ…ALERRRAQRD (195 aa)) are Cytoplasmic-facing.

The protein belongs to the non-lysosomal glucosylceramidase family.

The protein resides in the cell membrane. The enzyme catalyses a beta-D-glucosyl-(1&lt;-&gt;1')-N-acylsphing-4-enine + H2O = an N-acylsphing-4-enine + D-glucose. Non-lysosomal glucosylceramidase that catalyzes the conversion of glucosylceramide to free glucose and ceramide. The sequence is that of Non-lysosomal glucosylceramidase from Drosophila melanogaster (Fruit fly).